The following is a 196-amino-acid chain: Holliday junction branch migration complex subunit RuvA (196 aa).

The interval 1-65 (MIGYLRGKII…EDALQLFGFH (65 aa)) is domain I. Residues 66 to 140 (DKEEKNLFLS…GKLVSIEEGG (75 aa)) are domain II. The flexible linker stretch occupies residues 140 to 144 (GVVAK). Positions 145–196 (AKSVAHTQITSALLNLGYKSQLVDQFVSSLPADIAVEDGIRKGFQTLSGGLS) are domain III.

Belongs to the RuvA family. In terms of assembly, homotetramer. Forms an RuvA(8)-RuvB(12)-Holliday junction (HJ) complex. HJ DNA is sandwiched between 2 RuvA tetramers; dsDNA enters through RuvA and exits via RuvB. An RuvB hexamer assembles on each DNA strand where it exits the tetramer. Each RuvB hexamer is contacted by two RuvA subunits (via domain III) on 2 adjacent RuvB subunits; this complex drives branch migration. In the full resolvosome a probable DNA-RuvA(4)-RuvB(12)-RuvC(2) complex forms which resolves the HJ.

It is found in the cytoplasm. The RuvA-RuvB-RuvC complex processes Holliday junction (HJ) DNA during genetic recombination and DNA repair, while the RuvA-RuvB complex plays an important role in the rescue of blocked DNA replication forks via replication fork reversal (RFR). RuvA specifically binds to HJ cruciform DNA, conferring on it an open structure. The RuvB hexamer acts as an ATP-dependent pump, pulling dsDNA into and through the RuvAB complex. HJ branch migration allows RuvC to scan DNA until it finds its consensus sequence, where it cleaves and resolves the cruciform DNA. This Bdellovibrio bacteriovorus (strain ATCC 15356 / DSM 50701 / NCIMB 9529 / HD100) protein is Holliday junction branch migration complex subunit RuvA.